Here is an 867-residue protein sequence, read N- to C-terminus: Nuclear body protein SP140 (867 aa).

The region spanning V22–Y138 is the HSR domain. Disordered regions lie at residues T260–Q341, T365–L432, and I486–D580. Over residues K268 to D301 the composition is skewed to basic and acidic residues. Composition is skewed to acidic residues over residues E323–Q341 and E384–D397. Over residues A404–S416 the composition is skewed to low complexity. Composition is skewed to basic residues over residues K494–M512 and Q567–K577. The Nuclear localization signal signature appears at P495 to R514. An SAND domain is found at D580 to P661. A PHD-type zinc finger spans residues L690–K736. The residue at position 726 (T726) is a Phosphothreonine. The region spanning Q754 to V857 is the Bromo domain.

Interacts with PIN1. Phosphorylation at Thr-726 promotes binding of PIN1 and subsequent isomerization of Pro-727. In terms of tissue distribution, high levels in spleen and peripheral blood leukocytes, much lower levels in tonsils, thymus, prostate, ovary, small intestine, and colon. Very low levels in heart, brain, placenta, lung, liver, skeletal muscle, kidney, and pancreas. Not detected in brain, liver and muscle.

The protein localises to the nucleus. It localises to the PML body. Its subcellular location is the cytoplasm. In terms of biological role, component of the nuclear body, also known as nuclear domain 10, PML oncogenic domain, and KR body. May be involved in the pathogenesis of acute promyelocytic leukemia and viral infection. May play a role in chromatin-mediated regulation of gene expression although it does not bind to histone H3 tails. This Homo sapiens (Human) protein is Nuclear body protein SP140.